The chain runs to 914 residues: Protein translocase subunit SecA (914 aa).

Residues Gln87, 105–109 (GEGKT), and Asp508 each bind ATP. Zn(2+) contacts are provided by Cys898, Cys900, Cys909, and His910.

It belongs to the SecA family. Monomer and homodimer. Part of the essential Sec protein translocation apparatus which comprises SecA, SecYEG and auxiliary proteins SecDF-YajC and YidC. Requires Zn(2+) as cofactor.

The protein resides in the cell inner membrane. Its subcellular location is the cytoplasm. It catalyses the reaction ATP + H2O + cellular proteinSide 1 = ADP + phosphate + cellular proteinSide 2.. In terms of biological role, part of the Sec protein translocase complex. Interacts with the SecYEG preprotein conducting channel. Has a central role in coupling the hydrolysis of ATP to the transfer of proteins into and across the cell membrane, serving both as a receptor for the preprotein-SecB complex and as an ATP-driven molecular motor driving the stepwise translocation of polypeptide chains across the membrane. The sequence is that of Protein translocase subunit SecA from Xylella fastidiosa (strain M23).